The chain runs to 149 residues: Small ribosomal subunit protein uS11z (149 aa).

The disordered stretch occupies residues 130–149; sequence VTPVPTDSTRRKGGRRGRRL. Residues 140–149 are compositionally biased toward basic residues; it reads RKGGRRGRRL.

It belongs to the universal ribosomal protein uS11 family.

The chain is Small ribosomal subunit protein uS11z from Zea mays (Maize).